A 402-amino-acid polypeptide reads, in one-letter code: MDHVLNPEEKVSQTNSESGGADGAFQHVKGEHSSPKLSASEKSLPGNTKSPLKRKAAEPDSPPKRPRLEEGHGSLVVTHYNELPETGLEIRSQSRIFHLRNFNNWMKSALIGEFVEKVQQRTRNITVLDLGCGKGGDLLKWRKGGISKLVCTDIADVSVKQCEQRYKDMKRKSRNERIFEAEFLTSDSTKELLSEKYIDPEIKFDICSCQFVYHYSFETYEQADTMLRNACERLCPGGFFIGTTPDGFELVKRLEASDTNSFGNDVYTVTFEKKGKYPLFGCKYDFSLEEVVNVPEFLVYFPVLVEMAKKYQMKLIYKKTFREFFEEKVKNDEQKMLLKRMKALESYPAAPNTKLVSGRTEDYEHAQKMVENGQIKLPLGTLSKSEWDATSIYLLFAFEKQA.

The segment covering 1 to 11 (MDHVLNPEEKV) has biased composition (basic and acidic residues). A disordered region spans residues 1-75 (MDHVLNPEEK…PRLEEGHGSL (75 aa)). The segment covering 35–50 (PKLSASEKSLPGNTKS) has biased composition (polar residues). Basic and acidic residues predominate over residues 55–72 (KAAEPDSPPKRPRLEEGH). Positions 94 to 401 (SRIFHLRNFN…IYLLFAFEKQ (308 aa)) constitute an mRNA cap 0 methyltransferase domain. Residue 103–104 (NN) coordinates mRNA. S-adenosyl-L-methionine is bound by residues Lys107, Gly131, Asp153, Asp187, Gln210, and Tyr215.

The protein belongs to the class I-like SAM-binding methyltransferase superfamily. mRNA cap 0 methyltransferase family.

The protein localises to the nucleus. It catalyses the reaction a 5'-end (5'-triphosphoguanosine)-ribonucleoside in mRNA + S-adenosyl-L-methionine = a 5'-end (N(7)-methyl 5'-triphosphoguanosine)-ribonucleoside in mRNA + S-adenosyl-L-homocysteine. Its function is as follows. Catalytic subunit of the mRNA-capping methyltransferase RNMT:RAMAC complex that methylates the N7 position of the added guanosine to the 5'-cap structure of mRNAs. Binds RNA containing 5'-terminal GpppC. The polypeptide is mRNA cap guanine-N(7) methyltransferase (rnmt) (Xenopus laevis (African clawed frog)).